The chain runs to 479 residues: Oxysterol-binding protein homolog C23B6.01c (479 aa).

Phosphoserine occurs at positions 328, 408, 409, and 421. Residues Lys404 to Ser418 are compositionally biased toward basic and acidic residues. The disordered stretch occupies residues Lys404 to Leu479. The span at Gln439 to Gly452 shows a compositional bias: polar residues. Residues Lys470–Leu479 show a composition bias toward basic and acidic residues.

It belongs to the OSBP family.

Its subcellular location is the cytoplasm. It is found in the nucleus. The sequence is that of Oxysterol-binding protein homolog C23B6.01c from Schizosaccharomyces pombe (strain 972 / ATCC 24843) (Fission yeast).